The primary structure comprises 439 residues: Testican-1 (439 aa).

The N-terminal stretch at 1-21 (MPAIAVLAAAAAAWCFLQVES) is a signal peptide. 5 disulfides stabilise this stretch: cysteine 86–cysteine 97, cysteine 91–cysteine 107, cysteine 136–cysteine 166, cysteine 139–cysteine 159, and cysteine 148–cysteine 180. Positions 130-182 (PSNLVKCKPCPVAQSAMVCGSDGHSYTSKCKLEFHACSTGKSLATLCDGPCPC) constitute a Kazal-like domain. O-linked (GalNAc...) threonine glycosylation is present at threonine 228. Positions 310-376 (GLPCQNEMNR…GSRKQGAVSC (67 aa)) constitute a Thyroglobulin type-1 domain. 3 disulfides stabilise this stretch: cysteine 313–cysteine 337, cysteine 348–cysteine 355, and cysteine 357–cysteine 376. O-linked (Xyl...) (glycosaminoglycan) serine glycans are attached at residues serine 383 and serine 388. A disordered region spans residues 415–439 (VHTRAVTEDDEDEDDDKEDEVGYIW). Positions 422 to 439 (EDDEDEDDDKEDEVGYIW) are enriched in acidic residues.

In terms of processing, O-glycosylated. Glycosaminoglycan that contains chondroitin sulfate and heparan sulfate.

It is found in the secreted. The protein resides in the extracellular space. Its subcellular location is the extracellular matrix. In terms of biological role, may play a role in cell-cell and cell-matrix interactions. May contribute to various neuronal mechanisms in the central nervous system. This chain is Testican-1 (SPOCK1), found in Homo sapiens (Human).